Reading from the N-terminus, the 517-residue chain is Intermediate filament family orphan 2 (517 aa).

In terms of domain architecture, IF rod spans 53–484 (NIHLLKGLNV…RLIKGSADRN (432 aa)). Disordered regions lie at residues 104–129 (EQAV…SSGA), 330–349 (KVAS…RFSD), and 478–517 (KGSA…PMVS). The span at 485–497 (SPSPSSVASSDSG) shows a compositional bias: low complexity. A compositionally biased stretch (acidic residues) spans 501–517 (EIQDEFEREADVEPMVS).

This sequence belongs to the intermediate filament family.

This Homo sapiens (Human) protein is Intermediate filament family orphan 2 (IFFO2).